The chain runs to 197 residues: Glycerol-3-phosphate acyltransferase (197 aa).

6 consecutive transmembrane segments (helical) span residues 1-21, 50-70, 77-97, 111-131, 136-156, and 157-177; these read MNILIIFVSYLLGSLPTGFLI, WPALIVFIIDVGKGLIAVKIA, GLIEVIAGISAITGHIWPIWL, MFLALSWKVGLASLGIFLIVL, FVSLSSISAAIFLPFFMFFYL, and GNYMHSYFFISLIVALLVIWK.

Belongs to the PlsY family. As to quaternary structure, probably interacts with PlsX.

The protein resides in the cell inner membrane. The catalysed reaction is an acyl phosphate + sn-glycerol 3-phosphate = a 1-acyl-sn-glycero-3-phosphate + phosphate. Its pathway is lipid metabolism; phospholipid metabolism. Catalyzes the transfer of an acyl group from acyl-phosphate (acyl-PO(4)) to glycerol-3-phosphate (G3P) to form lysophosphatidic acid (LPA). This enzyme utilizes acyl-phosphate as fatty acyl donor, but not acyl-CoA or acyl-ACP. This Prochlorococcus marinus (strain MIT 9312) protein is Glycerol-3-phosphate acyltransferase.